We begin with the raw amino-acid sequence, 203 residues long: Thymidylate kinase (203 aa).

14-21 (GGEGIGKS) contributes to the ATP binding site.

The protein belongs to the thymidylate kinase family.

It carries out the reaction dTMP + ATP = dTDP + ADP. Its function is as follows. Phosphorylation of dTMP to form dTDP in both de novo and salvage pathways of dTTP synthesis. The protein is Thymidylate kinase of Rickettsia peacockii (strain Rustic).